Reading from the N-terminus, the 267-residue chain is GTP cyclohydrolase FolE2 (267 aa).

Belongs to the GTP cyclohydrolase IV family.

It carries out the reaction GTP + H2O = 7,8-dihydroneopterin 3'-triphosphate + formate + H(+). The protein operates within cofactor biosynthesis; 7,8-dihydroneopterin triphosphate biosynthesis; 7,8-dihydroneopterin triphosphate from GTP: step 1/1. Converts GTP to 7,8-dihydroneopterin triphosphate. The protein is GTP cyclohydrolase FolE2 of Cupriavidus necator (strain ATCC 17699 / DSM 428 / KCTC 22496 / NCIMB 10442 / H16 / Stanier 337) (Ralstonia eutropha).